We begin with the raw amino-acid sequence, 81 residues long: Small ribosomal subunit protein bS16 (81 aa).

Belongs to the bacterial ribosomal protein bS16 family.

This chain is Small ribosomal subunit protein bS16, found in Coprothermobacter proteolyticus (strain ATCC 35245 / DSM 5265 / OCM 4 / BT).